The sequence spans 740 residues: Death domain-associated protein 6 (740 aa).

A disordered region spans residues M1–G55. The segment at M1 to P160 is necessary for interaction with USP7 and ATRX. S25 carries the phosphoserine modification. Residues P29–G55 show a composition bias toward low complexity. Residue K142 forms a Glycyl lysine isopeptide (Lys-Gly) (interchain with G-Cter in SUMO2) linkage. The disordered stretch occupies residues P147 to R185. Positions A149–T181 are enriched in polar residues. Phosphoserine is present on residues S178 and S213. Coiled-coil stretches lie at residues R180–D217 and A358–Q399. Positions G183 to E417 are interaction with histone H3.3. The interval G347–E570 is necessary for interaction with USP7. The segment at D384 to V724 is disordered. The Nuclear localization signal motif lies at R391–R395. A phosphoserine mark is found at S412 and S424. Positions A430 to G489 form a coiled coil. The span at T435–A486 shows a compositional bias: acidic residues. The residue at position 459 (T459) is a Phosphothreonine. Residues S495 and S498 each carry the phosphoserine modification. Over residues P496–E505 the composition is skewed to polar residues. Positions Q501 to S625 are interaction with MAP3K5. K512 carries the N6-acetyllysine modification. A compositionally biased stretch (polar residues) spans I514 to K524. A compositionally biased stretch (low complexity) spans S529–S542. Over residues Q551–S561 the composition is skewed to acidic residues. Phosphoserine is present on residues S561 and S580. Residues T578–R590 show a composition bias toward polar residues. An interaction with SPOP region spans residues G626 to D740. (Microbial infection) Interaction with Puumala hantavirus nucleoprotein regions lie at residues P627–K634 and K658–I663. A Nuclear localization signal motif is present at residues P628–K634. Residues K630 and K631 each participate in a glycyl lysine isopeptide (Lys-Gly) (interchain with G-Cter in SUMO1) cross-link. The segment covering E650–G660 has biased composition (basic and acidic residues). A phosphoserine mark is found at S668 and S671. A compositionally biased stretch (low complexity) spans L673 to S683. Phosphoserine occurs at positions 688, 702, 737, and 739. Residues L693–H711 show a composition bias toward polar residues. Residues I733–D740 are sumo interaction motif (SIM).

The protein belongs to the DAXX family. As to quaternary structure, homomultimer. Interacts (via C-terminus) with TNFRSF6 (via death domain). Interacts with PAX5, SLC2A4/GLUT4, MAP3K5, TGFBR2, phosphorylated dimeric HSPB1/HSP27, CENPC, ETS1, sumoylated PML, UBE2I, MCRS1 and TP53. Interacts (via N-terminus) with HIPK2 and HIPK3. Interacts with HIPK1, which induces translocation from PML/POD/ND10 nuclear bodies to chromatin and enhances association with HDAC1. Interacts (non-phosphorylated) with PAX3, PAX7, DEK, HDAC1, HDAC2, HDAC3, acetylated histone H4 and histones H2A, H2B, H3, H3.3 and H4. Interacts with SPOP; mediating CUL3-dependent proteasomal degradation. Interacts with CBP; the interaction is dependent the sumoylation of CBP and suppresses CBP transcriptional activity via recruitment of HDAC2 directly in the complex with TP53 and HIPK2. Interacts with AXIN1; the interaction stimulates the interaction of DAXX with TP53, stimulates 'Ser-46' phosphorylation of TP53 on and induces cell death on UV irradiation. Interacts with MDM2; the interaction is direct. Interacts with USP7; the interaction is direct and independent of MDM2 and TP53. Part of a complex with DAXX, MDM2 and USP7 under non-stress conditions. Interacts (via N-terminus) with RASSF1 (via C-terminus); the interaction is independent of MDM2 and TP53; RASSF1 isoform A disrupts interactions among MDM2, DAXX and USP7, thus contributing to the efficient activation of TP53 by promoting MDM2 self-ubiquitination in cell-cycle checkpoint control in response to DNA damage. Interacts with ATRX to form the chromatin remodeling complex ATRX:DAXX. Interacts with HSF1 (via homotrimeric form preferentially); this interaction relieves homotrimeric HSF1 from repression of its transcriptional activity by HSP90-dependent multichaperone complex upon heat shock. Interacts with SUMO1P1/SUMO5. In terms of assembly, (Microbial infection) Interacts with human cytomegalovirus/HHV-5 tegument phosphoprotein pp71 and protein UL123. (Microbial infection) Interacts with Epstein-Barr virus protein BNRF1. As to quaternary structure, (Microbial infection) Interacts with human adenovirus 5 E1B-55K protein; this interaction might alterate the normal interactions of DAXX, PML, and TP53, which may contribute to cell transformation. In terms of assembly, (Microbial infection) Interacts with Puumala hantavirus nucleoprotein. Post-translationally, sumoylated with SUMO1 on multiple lysine residues. In terms of processing, phosphorylated by HIPK1 upon glucose deprivation. Polyubiquitinated; which is promoted by CUL3 and SPOP and results in proteasomal degradation. Ubiquitinated by MDM2; inducing its degradation. Deubiquitinated by USP7; leading to stabilize it. In terms of tissue distribution, ubiquitous.

It is found in the cytoplasm. Its subcellular location is the nucleus. The protein resides in the nucleoplasm. The protein localises to the PML body. It localises to the nucleolus. It is found in the chromosome. Its subcellular location is the centromere. In terms of biological role, transcription corepressor known to repress transcriptional potential of several sumoylated transcription factors. Down-regulates basal and activated transcription. Its transcription repressor activity is modulated by recruiting it to subnuclear compartments like the nucleolus or PML/POD/ND10 nuclear bodies through interactions with MCSR1 and PML, respectively. Seems to regulate transcription in PML/POD/ND10 nuclear bodies together with PML and may influence TNFRSF6-dependent apoptosis thereby. Inhibits transcriptional activation of PAX3 and ETS1 through direct protein-protein interactions. Modulates PAX5 activity; the function seems to involve CREBBP. Acts as an adapter protein in a MDM2-DAXX-USP7 complex by regulating the RING-finger E3 ligase MDM2 ubiquitination activity. Under non-stress condition, in association with the deubiquitinating USP7, prevents MDM2 self-ubiquitination and enhances the intrinsic E3 ligase activity of MDM2 towards TP53, thereby promoting TP53 ubiquitination and subsequent proteasomal degradation. Upon DNA damage, its association with MDM2 and USP7 is disrupted, resulting in increased MDM2 autoubiquitination and consequently, MDM2 degradation, which leads to TP53 stabilization. Acts as a histone chaperone that facilitates deposition of histone H3.3. Acts as a targeting component of the chromatin remodeling complex ATRX:DAXX which has ATP-dependent DNA translocase activity and catalyzes the replication-independent deposition of histone H3.3 in pericentric DNA repeats outside S-phase and telomeres, and the in vitro remodeling of H3.3-containing nucleosomes. Does not affect the ATPase activity of ATRX but alleviates its transcription repression activity. Upon neuronal activation associates with regulatory elements of selected immediate early genes where it promotes deposition of histone H3.3 which may be linked to transcriptional induction of these genes. Required for the recruitment of histone H3.3:H4 dimers to PML-nuclear bodies (PML-NBs); the process is independent of ATRX and facilitated by ASF1A; PML-NBs are suggested to function as regulatory sites for the incorporation of newly synthesized histone H3.3 into chromatin. In case of overexpression of centromeric histone variant CENPA (as found in various tumors) is involved in its mislocalization to chromosomes; the ectopic localization involves a heterotypic tetramer containing CENPA, and histones H3.3 and H4 and decreases binding of CTCF to chromatin. Proposed to mediate activation of the JNK pathway and apoptosis via MAP3K5 in response to signaling from TNFRSF6 and TGFBR2. Interaction with HSPB1/HSP27 may prevent interaction with TNFRSF6 and MAP3K5 and block DAXX-mediated apoptosis. In contrast, in lymphoid cells JNC activation and TNFRSF6-mediated apoptosis may not involve DAXX. Shows restriction activity towards human cytomegalovirus (HCMV). Plays a role as a positive regulator of the heat shock transcription factor HSF1 activity during the stress protein response. The protein is Death domain-associated protein 6 (DAXX) of Homo sapiens (Human).